The following is a 453-amino-acid chain: Indoleamine 2,3-dioxygenase (453 aa).

Residue H331 coordinates heme.

It belongs to the indoleamine 2,3-dioxygenase family. Heme is required as a cofactor.

It catalyses the reaction D-tryptophan + O2 = N-formyl-D-kynurenine. The enzyme catalyses L-tryptophan + O2 = N-formyl-L-kynurenine. Its pathway is cofactor biosynthesis; NAD(+) biosynthesis. Catalyzes the first step in tryptophan catabolism in order to supply de novo nicotinamide adenine dinucleotide (NAD(+)) via the kynurenine pathway. Plays a role in the cellular response to telomere uncapping. This chain is Indoleamine 2,3-dioxygenase (BNA2), found in Saccharomyces cerevisiae (strain ATCC 204508 / S288c) (Baker's yeast).